We begin with the raw amino-acid sequence, 150 residues long: Allograft inflammatory factor 1-like (150 aa).

Ser-2 bears the N-acetylserine mark. Ser-2 is modified (phosphoserine). The 36-residue stretch at 47–82 (EKLTAFKEKYMEFDLNNEGEIDLMSLKRMMEKLGVP) folds into the EF-hand 1 domain. 4 residues coordinate Ca(2+): Asp-60, Asn-62, Glu-64, and Glu-66. The 35-residue stretch at 83 to 117 (KTHLEMKKMISEVTGGVSDTISYRDFVNMMLGKRS) folds into the EF-hand 2; degenerate domain. The tract at residues 129–150 (KANESSPKPVGPPPERDIASLP) is disordered. Ser-134 is subject to Phosphoserine.

In terms of assembly, homodimer (Potential). Monomer.

It localises to the cytoplasm. It is found in the cytoskeleton. The protein localises to the cell projection. Its subcellular location is the ruffle membrane. Actin-binding protein that promotes actin bundling. May neither bind calcium nor depend on calcium for function. The protein is Allograft inflammatory factor 1-like (AIF1L) of Homo sapiens (Human).